The following is a 117-amino-acid chain: MKVLVICAVLFLAIFSNSSAETEDDFLEDESFQADDVIPFLASEQVRSDCTLRNHDCTDDRHSCCRSKMFKDVCKCFYPSQRSETDRAKKELCTCQQPKHLKYIEKGLQKAKDYATG.

An N-terminal signal peptide occupies residues Met1–Ala20. Residues Glu21–Arg47 constitute a propeptide that is removed on maturation. 4 disulfide bridges follow: Cys50/Cys65, Cys57/Cys74, Cys64/Cys95, and Cys76/Cys93. Positions Arg82–Arg87 are excised as a propeptide. Residue Thr116 is modified to Threonine amide.

This sequence belongs to the neurotoxin 19 (CSTX) family. 12 subfamily. As to quaternary structure, heterodimer of A and B chains; disulfide-linked. Interacts with CSTX-1 (AC P81694), and with CSTX-9 (AC P58604). In terms of tissue distribution, expressed by the venom gland.

It is found in the secreted. It localises to the target cell membrane. Synergistic toxin that induces or increases a cytolytic effect when combined with CSTX-1 (AC P81694) or CSTX-9 (AC P58604). When alone, has a weak insecticidal activity, with an unknown molecular target. The sequence is that of Toxin CSTX-8 from Cupiennius salei (American wandering spider).